The sequence spans 182 residues: Vacuolar protein sorting-associated protein 29 (182 aa).

The Zn(2+) site is built by aspartate 8, histidine 10, and asparagine 39. Lysine 50 is subject to N6-acetyllysine. Residues aspartate 62, histidine 86, histidine 115, and histidine 117 each coordinate Zn(2+).

The protein belongs to the VPS29 family. Component of the commander complex consisting of the CCC subcomplex and the retriever subcomplex. Component of the heterotrimeric retriever complex formed by VPS26C, VPS29 and VPS35L; within the complex interacts with VPS35L. Component of the heterotrimeric retromer cargo-selective complex (CSC), also described as vacuolar protein sorting subcomplex (VPS), formed by VPS26 (VPS26A or VPS26B), VPS29 and VPS35. The CSC has a highly elongated structure with VPS26 and VPS29 binding independently at opposite distal ends of VPS35 as central platform. The CSC is believed to associate with variable sorting nexins to form functionally distinct retromer complex variants. The originally described retromer complex (also called SNX-BAR retromer) is a pentamer containing the CSC and a heterodimeric membrane-deforming subcomplex formed between SNX1 or SNX2 and SNX5 or SNX6 (also called SNX-BAR subcomplex); the respective CSC and SNX-BAR subcomplexes associate with low affinity. The CSC associates with SNX3 to form a SNX3-retromer complex. The CSC associates with SNX27, the WASH complex and the SNX-BAR subcomplex to form the SNX27-retromer complex. Interacts with VPS26A, VPS35, SNX1, SNX2, SNX3, SNX27, WASHC5. Interacts with TBC1D5; this interaction is blocked by VPS35L in the retriever complex. Interacts with SNX17; the interaction is indirect; SNX17 (via its C-terminus) interacts with the retriever complex (via VPS26C and VPS35L). Interacts with VPS26B and ANKRD27. In terms of assembly, (Microbial infection) Interacts with human papillomavirus 16 minor capsid protein L2 (via C-terminus); this interaction mediates the transport of the capsid from the early endosome to the Golgi apparatus. In terms of tissue distribution, ubiquitous. Highly expressed in heart, lung, placenta, spleen, peripheral blood leukocytes, thymus, colon skeletal muscle, kidney and brain.

It is found in the cytoplasm. Its subcellular location is the membrane. It localises to the endosome membrane. The protein resides in the early endosome. The protein localises to the late endosome. In terms of biological role, component of the commander complex that is essential for endosomal recycling of transmembrane cargos; the commander complex is composed of the CCC subcomplex and the retriever subcomplex. Component of the retriever complex, which is a heterotrimeric complex related to retromer cargo-selective complex (CSC) and essential for retromer-independent retrieval and recycling of numerous cargos such as integrin alpha-5/beta-1 (ITGA5:ITGB1). Component of the retromer cargo-selective complex (CSC). The CSC is believed to be the core functional component of retromer or respective retromer complex variants acting to prevent missorting of selected transmembrane cargo proteins into the lysosomal degradation pathway. The recruitment of the CSC to the endosomal membrane involves RAB7A and SNX3. The SNX-BAR retromer mediates retrograde transport of cargo proteins from endosomes to the trans-Golgi network (TGN) and is involved in endosome-to-plasma membrane transport for cargo protein recycling. The SNX3-retromer mediates the retrograde endosome-to-TGN transport of WLS distinct from the SNX-BAR retromer pathway. The SNX27-retromer is believed to be involved in endosome-to-plasma membrane trafficking and recycling of a broad spectrum of cargo proteins. The CSC seems to act as recruitment hub for other proteins, such as the WASH complex and TBC1D5. Required to regulate transcytosis of the polymeric immunoglobulin receptor (pIgR-pIgA). In the endosomes, retriever complex drives the retrieval and recycling of NxxY-motif-containing cargo proteins by coupling to SNX17, a cargo essential for the homeostatic maintenance of numerous cell surface proteins associated with processes that include cell migration, cell adhesion, nutrient supply and cell signaling. The recruitment of the retriever complex to the endosomal membrane involves CCC and WASH complexes. Involved in GLUT1 endosome-to-plasma membrane trafficking; the function is dependent of association with ANKRD27. Functionally, (Microbial infection) The heterotrimeric retromer cargo-selective complex (CSC) mediates the exit of human papillomavirus from the early endosome and the delivery to the Golgi apparatus. This chain is Vacuolar protein sorting-associated protein 29, found in Homo sapiens (Human).